The primary structure comprises 371 residues: Cytochrome b (371 aa).

4 helical membrane-spanning segments follow: residues 25-45 (FGSMLLTCSALQVMTGFFLSM), 69-90 (WMMQNLHAIGASMFFICIYMHI), 105-125 (WLSGTTLLIMLMATAFFGYVL), and 170-190 (FFALHFILPFGIISMSSVHIM). Heme b contacts are provided by His75 and His89. Heme b is bound by residues His174 and His188. An a ubiquinone-binding site is contributed by His193. A run of 4 helical transmembrane segments spans residues 218-238 (YKDLLVISMMIITVLLTVSFF), 280-300 (LGGALALVMSIMILLTMPFTH), 312-332 (LMQFMFWTLVATFTVITWTAT), and 339-358 (FTTISQVASIIYFMFFMSNP).

It belongs to the cytochrome b family. As to quaternary structure, the cytochrome bc1 complex contains 3 respiratory subunits (MT-CYB, CYC1 and UQCRFS1), 2 core proteins (UQCRC1 and UQCRC2) and probably 6 low-molecular weight proteins. Heme b serves as cofactor.

It is found in the mitochondrion inner membrane. In terms of biological role, component of the ubiquinol-cytochrome c reductase complex (complex III or cytochrome b-c1 complex) that is part of the mitochondrial respiratory chain. The b-c1 complex mediates electron transfer from ubiquinol to cytochrome c. Contributes to the generation of a proton gradient across the mitochondrial membrane that is then used for ATP synthesis. The chain is Cytochrome b (MT-CYB) from Candoia carinata (Papuan tree boa).